The sequence spans 129 residues: Gene 58 protein (129 aa).

The interval 87–129 (GNIPVQRKPARKPSRRVFGESRSSGSSGSTVRPGIRGRSTPWS) is disordered. Low complexity predominate over residues 106-115 (ESRSSGSSGS).

The polypeptide is Gene 58 protein (58) (Mycobacterium (Mycobacteriophage D29)).